The chain runs to 232 residues: MINSDISEQLALMQLSDSFFPTGSFTFSHGLETLVQTGKIQSQPEILYFLQILLRNKVGVSDVVALIHSYRGCKNGDIEAVRVADRMLFVQTAIAKNRETQRQSGRALLMVASSTWQDERLKTLNIDAVSGNIHCLHPVIFGAVTSVVGLDERNAVLAFLHGLVTNILGAAIRLGILGHIQAQQILLQLVPDIEAVWSTAVSMNLEQMWSCTPFIDIAQMQHPKLAHKLFAN.

It belongs to the UreF family. UreD, UreF and UreG form a complex that acts as a GTP-hydrolysis-dependent molecular chaperone, activating the urease apoprotein by helping to assemble the nickel containing metallocenter of UreC. The UreE protein probably delivers the nickel.

Its subcellular location is the cytoplasm. In terms of biological role, required for maturation of urease via the functional incorporation of the urease nickel metallocenter. This chain is Urease accessory protein UreF, found in Trichodesmium erythraeum (strain IMS101).